The sequence spans 31 residues: Antifungal protein 1 (31 aa).

Composition is skewed to basic and acidic residues over residues 1-10 and 18-31; these read PGAGSQEERM and DFSH…MVRE. The interval 1 to 31 is disordered; the sequence is PGAGSQEERMQGQMEGQDFSHEERFLSMVRE.

In terms of assembly, heterodimer; disulfide-linked. In terms of processing, disulfide bonds.

Has antifungal activity against C.gloeosporioides but not against B.cinerea and Fusarium sp. or against various yeasts. Has no antibacterial activity. The protein is Antifungal protein 1 of Passiflora alata (Winged-stem passion flower).